The primary structure comprises 158 residues: Ankyrin repeat domain-containing protein 37 (158 aa).

ANK repeat units follow at residues 1–25, 30–59, and 63–92; these read MLLL…SVNA, CEQS…DLNQ, and FGEA…QIDL. Residues 129–149 carry the Nuclear localization signal motif; that stretch reads EQPNKDHCVQVLRLKRSFGSE.

Ubiquitinated by the CRL2(FEM1B) complex, leading to its degradation.

The protein localises to the nucleus. The protein resides in the cytoplasm. This chain is Ankyrin repeat domain-containing protein 37 (ANKRD37), found in Bos taurus (Bovine).